A 302-amino-acid chain; its full sequence is Ribosomal RNA small subunit methyltransferase H (302 aa).

S-adenosyl-L-methionine-binding positions include 36 to 38, D56, F84, D99, and Q106; that span reads GGH.

This sequence belongs to the methyltransferase superfamily. RsmH family.

The protein resides in the cytoplasm. The enzyme catalyses cytidine(1402) in 16S rRNA + S-adenosyl-L-methionine = N(4)-methylcytidine(1402) in 16S rRNA + S-adenosyl-L-homocysteine + H(+). Functionally, specifically methylates the N4 position of cytidine in position 1402 (C1402) of 16S rRNA. The sequence is that of Ribosomal RNA small subunit methyltransferase H from Christiangramia forsetii (strain DSM 17595 / CGMCC 1.15422 / KT0803) (Gramella forsetii).